The primary structure comprises 477 residues: TNF receptor-associated factor family protein DDB_G0278133 (477 aa).

The RING-type; degenerate zinc finger occupies 45-88; the sequence is CDICTLELFIESEPKALQCKEGHLACRRCWERYLSTNKQCMTCK. 2 consecutive TRAF-type zinc fingers follow at residues 160-211 and 212-267; these read NHYK…SSLS and DHHK…SKMQ. Residues 271-326 adopt a coiled-coil conformation; it reads LEHSVTKLMNQNEIIKKDNQNLDQEKKIEEIKLKLNNLLNNYIQLKNEIAVLKQNS. One can recognise an MATH domain in the interval 331-463; the sequence is VYSNKWIIPE…FLNEKGELEI (133 aa).

It belongs to the TNF receptor-associated factor family. A subfamily.

Its subcellular location is the cytoplasm. Probable adapter protein and signal transducer that links members of the tumor necrosis factor receptor family to different signaling pathways by association with the receptor cytoplasmic domain and kinases. The polypeptide is TNF receptor-associated factor family protein DDB_G0278133 (Dictyostelium discoideum (Social amoeba)).